Here is a 420-residue protein sequence, read N- to C-terminus: Glutamate-1-semialdehyde 2,1-aminomutase (420 aa).

At Lys-259 the chain carries N6-(pyridoxal phosphate)lysine.

The protein belongs to the class-III pyridoxal-phosphate-dependent aminotransferase family. HemL subfamily. In terms of assembly, homodimer. Requires pyridoxal 5'-phosphate as cofactor.

The protein localises to the cytoplasm. The enzyme catalyses (S)-4-amino-5-oxopentanoate = 5-aminolevulinate. It participates in porphyrin-containing compound metabolism; protoporphyrin-IX biosynthesis; 5-aminolevulinate from L-glutamyl-tRNA(Glu): step 2/2. This is Glutamate-1-semialdehyde 2,1-aminomutase from Nautilia profundicola (strain ATCC BAA-1463 / DSM 18972 / AmH).